Reading from the N-terminus, the 643-residue chain is Fructose-1,6-bisphosphatase class 3 (643 aa).

The protein belongs to the FBPase class 3 family. The cofactor is Mn(2+).

It carries out the reaction beta-D-fructose 1,6-bisphosphate + H2O = beta-D-fructose 6-phosphate + phosphate. It functions in the pathway carbohydrate biosynthesis; gluconeogenesis. The polypeptide is Fructose-1,6-bisphosphatase class 3 (Lacticaseibacillus casei (strain BL23) (Lactobacillus casei)).